The sequence spans 233 residues: NAD-dependent protein deacylase (233 aa).

The region spanning 1-230 (MKNIMILSGA…ALDIENFMKD (230 aa)) is the Deacetylase sirtuin-type domain. 9-28 (GAGLSAPSGLKTFRDNDGLW) is a binding site for NAD(+). 2 residues coordinate substrate: tyrosine 53 and arginine 56. 88 to 91 (QNVD) provides a ligand contact to NAD(+). The active-site Proton acceptor is the histidine 106. Zn(2+) contacts are provided by cysteine 114, cysteine 117, cysteine 133, and cysteine 136. NAD(+)-binding positions include 172-174 (GTS) and 200-202 (NLE).

Belongs to the sirtuin family. Class III subfamily. Zn(2+) serves as cofactor.

It localises to the cytoplasm. The enzyme catalyses N(6)-acetyl-L-lysyl-[protein] + NAD(+) + H2O = 2''-O-acetyl-ADP-D-ribose + nicotinamide + L-lysyl-[protein]. The catalysed reaction is N(6)-succinyl-L-lysyl-[protein] + NAD(+) + H2O = 2''-O-succinyl-ADP-D-ribose + nicotinamide + L-lysyl-[protein]. Functionally, NAD-dependent lysine deacetylase and desuccinylase that specifically removes acetyl and succinyl groups on target proteins. Modulates the activities of several proteins which are inactive in their acylated form. This Campylobacter jejuni subsp. jejuni serotype O:2 (strain ATCC 700819 / NCTC 11168) protein is NAD-dependent protein deacylase.